Here is a 292-residue protein sequence, read N- to C-terminus: Protease HtpX homolog (292 aa).

2 consecutive transmembrane segments (helical) span residues 7 to 27 (TFILMAALTALVMGMGGLIGG) and 29 to 49 (GGAVIALAIAGAGNLFAWWNS). Zn(2+) is bound at residue His131. Residue Glu132 is part of the active site. Residue His135 coordinates Zn(2+). 2 consecutive transmembrane segments (helical) span residues 148–168 (ATMAGAIAMLGNMLMFSSMFG) and 178–198 (LAAILAMIFAPMAAGLVQMAI). Zn(2+) is bound at residue Glu203.

This sequence belongs to the peptidase M48B family. Requires Zn(2+) as cofactor.

It localises to the cell inner membrane. This chain is Protease HtpX homolog, found in Paracoccus denitrificans (strain Pd 1222).